Reading from the N-terminus, the 451-residue chain is Deoxyguanosinetriphosphate triphosphohydrolase-like protein (451 aa).

One can recognise an HD domain in the interval 61-274 (RLTHSLEVAQ…MELADDIAYG (214 aa)).

The protein belongs to the dGTPase family. Type 2 subfamily.

The sequence is that of Deoxyguanosinetriphosphate triphosphohydrolase-like protein from Actinobacillus succinogenes (strain ATCC 55618 / DSM 22257 / CCUG 43843 / 130Z).